Consider the following 794-residue polypeptide: Protein SEY1 (794 aa).

Over 1-687 (MMEVIDSVLG…KRSIIKTTTA (687 aa)) the chain is Cytoplasmic. In terms of domain architecture, GB1/RHD3-type G spans 43–272 (GLDYHVISVF…ANPYYFKPQY (230 aa)). GTP is bound at residue 53-60 (GSQSSGKS). Residues 331–352 (VDHILDDREKLGEVLKNLKQEC) adopt a coiled-coil conformation. A helical membrane pass occupies residues 688-708 (IPIWMYLLVVALGWNEFVMVL). Residues 709-711 (RNP) are Lumenal-facing. Residues 712–732 (LLVTLVLLFGVGFIFVNKFGL) traverse the membrane as a helical segment. Over 733-794 (WGPVLNVAHN…SDNEKIEKSE (62 aa)) the chain is Cytoplasmic. The tract at residues 770–794 (NSAGKESYEMKDMSDSDNEKIEKSE) is disordered. Residues 775 to 794 (ESYEMKDMSDSDNEKIEKSE) show a composition bias toward basic and acidic residues.

The protein belongs to the TRAFAC class dynamin-like GTPase superfamily. GB1/RHD3 GTPase family. RHD3 subfamily.

It is found in the endoplasmic reticulum membrane. Its function is as follows. Cooperates with the reticulon proteins and tubule-shaping DP1 family proteins to generate and maintain the structure of the tubular endoplasmic reticulum network. Has GTPase activity, which is required for its function in ER organization. In Zygosaccharomyces rouxii (strain ATCC 2623 / CBS 732 / NBRC 1130 / NCYC 568 / NRRL Y-229), this protein is Protein SEY1.